The following is a 208-amino-acid chain: 3-demethoxyubiquinol 3-hydroxylase (208 aa).

Fe cation contacts are provided by Glu-57, Glu-87, His-90, Glu-139, Glu-171, and His-174.

This sequence belongs to the COQ7 family. Requires Fe cation as cofactor.

It localises to the cell membrane. It catalyses the reaction a 5-methoxy-2-methyl-3-(all-trans-polyprenyl)benzene-1,4-diol + AH2 + O2 = a 3-demethylubiquinol + A + H2O. The protein operates within cofactor biosynthesis; ubiquinone biosynthesis. Its function is as follows. Catalyzes the hydroxylation of 2-nonaprenyl-3-methyl-6-methoxy-1,4-benzoquinol during ubiquinone biosynthesis. This chain is 3-demethoxyubiquinol 3-hydroxylase, found in Burkholderia ambifaria (strain ATCC BAA-244 / DSM 16087 / CCUG 44356 / LMG 19182 / AMMD) (Burkholderia cepacia (strain AMMD)).